The primary structure comprises 194 residues: Peptidyl-tRNA hydrolase (194 aa).

Tyr16 contacts tRNA. The Proton acceptor role is filled by His21. Residues Phe67, Asn69, and Asn115 each coordinate tRNA.

Belongs to the PTH family. As to quaternary structure, monomer.

It is found in the cytoplasm. It catalyses the reaction an N-acyl-L-alpha-aminoacyl-tRNA + H2O = an N-acyl-L-amino acid + a tRNA + H(+). Functionally, hydrolyzes ribosome-free peptidyl-tRNAs (with 1 or more amino acids incorporated), which drop off the ribosome during protein synthesis, or as a result of ribosome stalling. In terms of biological role, catalyzes the release of premature peptidyl moieties from peptidyl-tRNA molecules trapped in stalled 50S ribosomal subunits, and thus maintains levels of free tRNAs and 50S ribosomes. This Sodalis glossinidius (strain morsitans) protein is Peptidyl-tRNA hydrolase.